Reading from the N-terminus, the 553-residue chain is Putative ABC transporter ATP-binding protein BCE_3323 (553 aa).

ABC transporter domains lie at 7–245 and 295–527; these read AEIN…FRPF and LSAE…SINR. Residues 41 to 48 and 329 to 336 contribute to the ATP site; these read GGSGSGKT and GKNGTGKS.

It belongs to the ABC transporter superfamily.

It is found in the cell membrane. Probably part of an ABC transporter complex. Responsible for energy coupling to the transport system. In Bacillus cereus (strain ATCC 10987 / NRS 248), this protein is Putative ABC transporter ATP-binding protein BCE_3323.